Here is a 338-residue protein sequence, read N- to C-terminus: Nicotinate-nucleotide--dimethylbenzimidazole phosphoribosyltransferase (338 aa).

The active-site Proton acceptor is the E306.

The protein belongs to the CobT family.

The catalysed reaction is 5,6-dimethylbenzimidazole + nicotinate beta-D-ribonucleotide = alpha-ribazole 5'-phosphate + nicotinate + H(+). Its pathway is nucleoside biosynthesis; alpha-ribazole biosynthesis; alpha-ribazole from 5,6-dimethylbenzimidazole: step 1/2. Catalyzes the synthesis of alpha-ribazole-5'-phosphate from nicotinate mononucleotide (NAMN) and 5,6-dimethylbenzimidazole (DMB). The polypeptide is Nicotinate-nucleotide--dimethylbenzimidazole phosphoribosyltransferase (Cereibacter sphaeroides (strain ATCC 17023 / DSM 158 / JCM 6121 / CCUG 31486 / LMG 2827 / NBRC 12203 / NCIMB 8253 / ATH 2.4.1.) (Rhodobacter sphaeroides)).